Reading from the N-terminus, the 331-residue chain is Protein FLX-like 1 (331 aa).

The interval 1–51 (MSGRNRGPPPPSMKGGSYSGLQAPVHQPPFVRGLGGGPVPPPPHPSMIDDS) is disordered. Residues 69–252 (ILEDRLAAQN…AEIANSETSA (184 aa)) are a coiled coil. The span at 306–321 (QAAWAGGYDPQQQQQQ) shows a compositional bias: low complexity. The segment at 306-331 (QAAWAGGYDPQQQQQQQPPPQGQGHR) is disordered. Residues 322–331 (QPPPQGQGHR) are compositionally biased toward pro residues.

Belongs to the FLX family. As to quaternary structure, interacts with FRI.

In terms of biological role, has no transcriptional activation activity. The sequence is that of Protein FLX-like 1 (FLXL1) from Arabidopsis thaliana (Mouse-ear cress).